Here is a 267-residue protein sequence, read N- to C-terminus: Methylglyoxal reductase DkgB (267 aa).

The active-site Proton donor is Tyr39. His97 serves as a coordination point for substrate. 179-231 (MTLAYGKALKDEVIARIAAKHNATPAQVILAWAMGEGYSVIPSSTRRENLASS) contributes to the NADP(+) binding site.

This sequence belongs to the aldo/keto reductase family. As to quaternary structure, monomer.

The protein localises to the cytoplasm. It carries out the reaction hydroxyacetone + NADP(+) = methylglyoxal + NADPH + H(+). Aldo-keto reductase that significantly contributes to cellular methylglyoxal detoxification by catalyzing the NADPH-dependent conversion of methylglyoxal to acetol. The chain is Methylglyoxal reductase DkgB from Salmonella typhimurium (strain LT2 / SGSC1412 / ATCC 700720).